The primary structure comprises 88 residues: Small ribosomal subunit protein uS15 (88 aa).

This sequence belongs to the universal ribosomal protein uS15 family. Part of the 30S ribosomal subunit. Forms a bridge to the 50S subunit in the 70S ribosome, contacting the 23S rRNA.

In terms of biological role, one of the primary rRNA binding proteins, it binds directly to 16S rRNA where it helps nucleate assembly of the platform of the 30S subunit by binding and bridging several RNA helices of the 16S rRNA. Forms an intersubunit bridge (bridge B4) with the 23S rRNA of the 50S subunit in the ribosome. The sequence is that of Small ribosomal subunit protein uS15 from Geobacter sulfurreducens (strain ATCC 51573 / DSM 12127 / PCA).